Consider the following 168-residue polypeptide: Probable prefoldin subunit 5 (168 aa).

It belongs to the prefoldin subunit alpha family. Heterohexamer of two PFD-alpha type and four PFD-beta type subunits.

Functionally, binds specifically to cytosolic chaperonin (c-CPN) and transfers target proteins to it. Binds to nascent polypeptide chain and promotes folding in an environment in which there are many competing pathways for nonnative proteins. This chain is Probable prefoldin subunit 5, found in Drosophila melanogaster (Fruit fly).